Reading from the N-terminus, the 146-residue chain is Linear conopeptide (146 aa).

An N-terminal signal peptide occupies residues 1 to 19 (MLRLIIAAAVLVSACLAYP). A propeptide spanning residues 20–34 (QRREGAPADAANLQS) is cleaved from the precursor. Methionine 40 carries the post-translational modification Methionine sulfoxide; partial; in Cn2. 2 consecutive propeptides follow at residues 58 to 80 (FLPF…LEKR) and 104 to 146 (FLHN…DKEQ). A disordered region spans residues 107–146 (NEKGDKHPFANVDSADTDLGQFEPSAENKNGEFRFFDKEQ). Positions 135–146 (KNGEFRFFDKEQ) are enriched in basic and acidic residues.

As to expression, expressed by the venom duct.

The protein localises to the secreted. The protein is Linear conopeptide of Conus consors (Singed cone).